A 263-amino-acid polypeptide reads, in one-letter code: Shikimate dehydrogenase (NADP(+)) (263 aa).

Residues 14 to 16 (SLS) and T60 contribute to the shikimate site. Catalysis depends on K64, which acts as the Proton acceptor. 2 residues coordinate shikimate: N85 and D100. NADP(+) contacts are provided by residues 123–127 (GAGGA), 146–151 (NRTPQR), and L205. Y207 contributes to the shikimate binding site. An NADP(+)-binding site is contributed by G228.

This sequence belongs to the shikimate dehydrogenase family. Homodimer.

It catalyses the reaction shikimate + NADP(+) = 3-dehydroshikimate + NADPH + H(+). It participates in metabolic intermediate biosynthesis; chorismate biosynthesis; chorismate from D-erythrose 4-phosphate and phosphoenolpyruvate: step 4/7. Involved in the biosynthesis of the chorismate, which leads to the biosynthesis of aromatic amino acids. Catalyzes the reversible NADPH linked reduction of 3-dehydroshikimate (DHSA) to yield shikimate (SA). The polypeptide is Shikimate dehydrogenase (NADP(+)) (Thermus thermophilus (strain ATCC BAA-163 / DSM 7039 / HB27)).